Reading from the N-terminus, the 514-residue chain is 2,3-bisphosphoglycerate-independent phosphoglycerate mutase (514 aa).

Mn(2+) is bound by residues Asp-13 and Ser-63. Residue Ser-63 is the Phosphoserine intermediate of the active site. Substrate-binding positions include His-124, 154-155 (RD), Arg-186, Arg-192, 258-261 (RADR), and Lys-332. 5 residues coordinate Mn(2+): Asp-399, His-403, Asp-440, His-441, and His-459.

This sequence belongs to the BPG-independent phosphoglycerate mutase family. Monomer. Mn(2+) serves as cofactor.

The catalysed reaction is (2R)-2-phosphoglycerate = (2R)-3-phosphoglycerate. The protein operates within carbohydrate degradation; glycolysis; pyruvate from D-glyceraldehyde 3-phosphate: step 3/5. Functionally, catalyzes the interconversion of 2-phosphoglycerate and 3-phosphoglycerate. This Legionella pneumophila (strain Corby) protein is 2,3-bisphosphoglycerate-independent phosphoglycerate mutase.